The primary structure comprises 363 residues: MKIKLILACALMVFSAASSAQRIKDIANVQGVRSNQLIGYGLVVGLPGTGEKTRYTEQTFKTMLKNFGINLPDNFRPKIKNVAVVAVSADMPAFIKPGQTLDVTVSSLGEAKSLRGGTLLQTFLKGVDGNVYAIAQGSMVVSGFSAEGLDGSKVIQNTPTVGRIPNGAIVERTVATPFSTGDHLTFNLRRADFSTAKRLADAINDLLGPGMARPLDAASVQVSAPRDVSQRVSFLATLENIEVEPASESAKVIVNSRTGTIVVGKDVRLLPAAVTHGGLTVTIAEATQVSQPNPLAGGDTVVTSDSTIDVSEADNRMFLFNPGTTLDELVRAVNLVGAAPSDVLAILEALKVAGALHGELIII.

Positions 1-20 are cleaved as a signal peptide; that stretch reads MKIKLILACALMVFSAASSA.

Belongs to the FlgI family. The basal body constitutes a major portion of the flagellar organelle and consists of four rings (L,P,S, and M) mounted on a central rod.

It is found in the periplasm. Its subcellular location is the bacterial flagellum basal body. In terms of biological role, assembles around the rod to form the L-ring and probably protects the motor/basal body from shearing forces during rotation. This Shewanella loihica (strain ATCC BAA-1088 / PV-4) protein is Flagellar P-ring protein.